A 321-amino-acid polypeptide reads, in one-letter code: Protoheme IX farnesyltransferase (321 aa).

10 helical membrane passes run 28–48, 49–69, 94–114, 116–136, 149–169, 176–196, 222–242, 247–267, 277–297, and 300–320; these read VMSLVIFTALAGMLIAPDPVH, PIVGFASLLAIAVGAGASGAL, VMPNEALAFGLTLSFLSVFTL, IVANWLAAGFLAFTIFFYVVI, IVIGGAAGAFPPMVGYAAATG, FILFAIIFIWTPPHFWALALG, ILLYTLLLAPLGVAPWLLGFA, GMLSIALGAAMLFFAARVYIV, AKALFGFSILYLFLLFAEIVV, and LVPIVVAMGAWLTSGMFPGFF.

This sequence belongs to the UbiA prenyltransferase family. Protoheme IX farnesyltransferase subfamily.

The protein resides in the cell inner membrane. The enzyme catalyses heme b + (2E,6E)-farnesyl diphosphate + H2O = Fe(II)-heme o + diphosphate. It participates in porphyrin-containing compound metabolism; heme O biosynthesis; heme O from protoheme: step 1/1. Functionally, converts heme B (protoheme IX) to heme O by substitution of the vinyl group on carbon 2 of heme B porphyrin ring with a hydroxyethyl farnesyl side group. The protein is Protoheme IX farnesyltransferase of Beijerinckia indica subsp. indica (strain ATCC 9039 / DSM 1715 / NCIMB 8712).